A 350-amino-acid polypeptide reads, in one-letter code: MRFLAGGASASVAAVGAGTVADLWEVKRRGTAMGYFFLGPMLGPLVSPIIGGILTQRFGWRSTQWGAVVYGGLVWLSMIFLLPETSSKAVKGKEPAVAENSDDGNVQPVPESCVSRFFKALGRMLVEPFRLVGYLRSPPLFMTCYYASISFACYYILNLAIQRTFSRDPYSFRAIILGLLYIPSALGSIVASVVGGRWTDYVMRREAKAAGRFDESGNPKFRPSDRMCENAWIPAFVFPAALLVFGWTTHEGIFWFAPIVVTFFFGLGNSLIFNTATTMLTEILPGKASNAVALNNLMRNTLSCAAAVATDPLLGAIGTQWLFTGLAVICWASSGVIWALKRHSDKAPSA.

Helical transmembrane passes span 3 to 23, 34 to 54, 65 to 85, 141 to 161, 174 to 194, 227 to 247, 253 to 273, and 312 to 332; these read FLAG…VADL, GYFF…GGIL, WGAV…LPET, FMTC…NLAI, AIIL…ASVV, MCEN…VFGW, IFWF…SLIF, and PLLG…ICWA.

Belongs to the major facilitator superfamily.

The protein resides in the cell membrane. Its function is as follows. MFS transporter; part of the gene cluster that mediates the biosynthesis of the bibenzoquinone oosporein, a metabolite required for fungal virulence that acts by evading host immunity to facilitate fungal multiplication in insects. The function of this putative MFS transporter remains unclear since its deletion leads to increased oosporein production. The chain is MFS transporter OpS2 from Beauveria bassiana (strain ARSEF 2860) (White muscardine disease fungus).